Consider the following 454-residue polypeptide: Metalloprotease MTH_856 (454 aa).

The tract at residues 92 to 115 (QVGSGAPSVDKTMVRSSRPPSDVP) is disordered.

It belongs to the peptidase U62 family.

Probable metalloprotease. This chain is Metalloprotease MTH_856, found in Methanothermobacter thermautotrophicus (strain ATCC 29096 / DSM 1053 / JCM 10044 / NBRC 100330 / Delta H) (Methanobacterium thermoautotrophicum).